Consider the following 147-residue polypeptide: 3-dehydroquinate dehydratase (147 aa).

Tyr23 functions as the Proton acceptor in the catalytic mechanism. Residues Asn75, His81, and Asp88 each coordinate substrate. His101 serves as the catalytic Proton donor. Residues 102–103 (LS) and Arg112 each bind substrate.

This sequence belongs to the type-II 3-dehydroquinase family. Homododecamer.

It carries out the reaction 3-dehydroquinate = 3-dehydroshikimate + H2O. The protein operates within metabolic intermediate biosynthesis; chorismate biosynthesis; chorismate from D-erythrose 4-phosphate and phosphoenolpyruvate: step 3/7. Functionally, catalyzes a trans-dehydration via an enolate intermediate. The sequence is that of 3-dehydroquinate dehydratase from Hahella chejuensis (strain KCTC 2396).